Reading from the N-terminus, the 515-residue chain is Bifunctional purine biosynthesis protein PurH (515 aa).

An MGS-like domain is found at 1–145; sequence MTKRVLISVS…KNHASVTVVV (145 aa).

It belongs to the PurH family.

It carries out the reaction (6R)-10-formyltetrahydrofolate + 5-amino-1-(5-phospho-beta-D-ribosyl)imidazole-4-carboxamide = 5-formamido-1-(5-phospho-D-ribosyl)imidazole-4-carboxamide + (6S)-5,6,7,8-tetrahydrofolate. It catalyses the reaction IMP + H2O = 5-formamido-1-(5-phospho-D-ribosyl)imidazole-4-carboxamide. It participates in purine metabolism; IMP biosynthesis via de novo pathway; 5-formamido-1-(5-phospho-D-ribosyl)imidazole-4-carboxamide from 5-amino-1-(5-phospho-D-ribosyl)imidazole-4-carboxamide (10-formyl THF route): step 1/1. It functions in the pathway purine metabolism; IMP biosynthesis via de novo pathway; IMP from 5-formamido-1-(5-phospho-D-ribosyl)imidazole-4-carboxamide: step 1/1. This Streptococcus pneumoniae (strain P1031) protein is Bifunctional purine biosynthesis protein PurH.